Reading from the N-terminus, the 1200-residue chain is MRIKRLDITGFKSFMERSVFTFDEGVTGIVGPNGCGKSNVVDAIRWVMGEQSAKNLRGRGMEDVIFNGSENKPPLSMAEVSLTFIVDDTDQLAPQYQGFSEVTVTRRLFRNGDSEYLINKTLCRLLDITELFLGTGVGTKAYSIIEQGRVGLIVSSKPEDRRHLLEEAAGVTKYKARRKAAERKMEATDANLLRVTDITNELEKRLDALSRQAKKAEKYKKLKARMRDIDLHAATHRQLELMAEKKMLQSRLENLGSEERESLDRVKELEETITRRRTELEAETAALQALAAEVHTLESSLQRDTQEMTYGKRDLEETRARVAAAQVELDGLLARKAEMSEAMAAREAELSGIAGSWKEDEVAMQVAQEELRRVSQLQTEVALRLEQERAGLVAVATRLANHESNLVNLARQRGDLGARRAKLQGELETLRAQEQTLENVRGDVAKRVEDTRHLAAELAERKGQEEDALTRTRAAFTENEIEVIALREELSDKRSRLSTLEDIQKNYDGFDRGVRAVMTRAGVQAREQGIFGLVADVINVTPRYERAVEAALGERLQHVIVESRDKGVELVDYLKGHAEGRGSFLPVPALDTLPAPLEPDFSQPGVLAHALREVTCEEALTPLVQLLLGDVVIVQDVATARAWTESGGPACTLVTVEGEVFRPDGTIVGGESEGAAVGALQKKREIAELATEVARVEERYNEILTRHYTLQKQMGHAEGVLKGLAKNQHAEELNLASQEKDLHKAGEDLARVRERVRALEVEEGQLTQSHQALEHEEEASRGEVAHGQADREGREERVKQLVSEQESLRLRAETANGELTGLRIKVAAGSERGESARKELDSLVSQRQDMETRITRLQATVVEGGARVEELARRTTDTEGGLSQRAEEHRLAAEGLEARRAAHTTASAEVREQDATFRELRGRVDELMQGLSQISLREREIALELEHLAAGIRERHQVELANELHKYHMLAALAPETEAELKDLRAQVEKMGEINLTAIDEHAELSKRYDFLTAQKKDLQSSIEQLKEAIQRIDATSRERFKQTFDVVNEKFQAIFPRLFGGGRASLILTNEGPGGEPGVEIVAQPPGKKLQSVNLLSGGEKALTAVGLIFGIFLIKPTPFCLLDEVDAPLDEGNVGRYNDMVKEMSKQSQFILITHNKRTMEVSNTLYGVTMEEPGISKLVSVRMREAGAANDDKVTAA.

32–39 provides a ligand contact to ATP; that stretch reads PNGCGKSN. Coiled-coil stretches lie at residues 171–219 and 252–342; these read VTKY…AEKY and LENL…MSEA. Residues 528–644 enclose the SMC hinge domain; sequence QGIFGLVADV…QDVATARAWT (117 aa). 2 coiled-coil regions span residues 679 to 706 and 735 to 762; these read ALQK…ILTR and LASQ…LEVE. A disordered region spans residues 763–795; sequence EGQLTQSHQALEHEEEASRGEVAHGQADREGRE. A compositionally biased stretch (basic and acidic residues) spans 772-795; it reads ALEHEEEASRGEVAHGQADREGRE. Positions 1002–1039 form a coiled coil; that stretch reads HAELSKRYDFLTAQKKDLQSSIEQLKEAIQRIDATSRE.

It belongs to the SMC family. As to quaternary structure, homodimer. Probably forms the Structural Maintenance of Chromosome (SMC) condensin-like complex with ScpA and ScpB.

It localises to the cytoplasm. In terms of biological role, a conditionally essential component of the chromosome segregation machinery. Required for chromosome condensation and partitioning. Important for positioning of ParB-parS complexes (ori of replication) and of the ter replication site, as well as for segration of the ParB-parS complex and thus chromosome segregation. May act via the formation of a condensin-like complex containing Smc, ScpA and ScpB that pulls DNA away from mid-cell into both cell halves. The sequence is that of Chromosome partition protein Smc from Myxococcus xanthus (strain DK1622).